A 179-amino-acid chain; its full sequence is Large ribosomal subunit protein uL5 (179 aa).

The protein belongs to the universal ribosomal protein uL5 family. In terms of assembly, part of the 50S ribosomal subunit; part of the 5S rRNA/L5/L18/L25 subcomplex. Contacts the 5S rRNA and the P site tRNA. Forms a bridge to the 30S subunit in the 70S ribosome.

Functionally, this is one of the proteins that bind and probably mediate the attachment of the 5S RNA into the large ribosomal subunit, where it forms part of the central protuberance. In the 70S ribosome it contacts protein S13 of the 30S subunit (bridge B1b), connecting the 2 subunits; this bridge is implicated in subunit movement. Contacts the P site tRNA; the 5S rRNA and some of its associated proteins might help stabilize positioning of ribosome-bound tRNAs. The chain is Large ribosomal subunit protein uL5 from Buchnera aphidicola subsp. Schizaphis graminum (strain Sg).